The primary structure comprises 482 residues: Hydroxymethylglutaryl-CoA synthase A (482 aa).

The active-site Proton donor/acceptor is the Glu-85. Cys-119 acts as the Acyl-thioester intermediate in catalysis. Positions 119, 161, 211, 249, 258, 325, and 358 each coordinate (3S)-3-hydroxy-3-methylglutaryl-CoA. The active-site Proton donor/acceptor is the His-249.

Belongs to the thiolase-like superfamily. HMG-CoA synthase family.

The catalysed reaction is acetoacetyl-CoA + acetyl-CoA + H2O = (3S)-3-hydroxy-3-methylglutaryl-CoA + CoA + H(+). Its pathway is metabolic intermediate biosynthesis; (R)-mevalonate biosynthesis; (R)-mevalonate from acetyl-CoA: step 2/3. Its function is as follows. Condenses acetyl-CoA with acetoacetyl-CoA to form HMG-CoA, which is the substrate for HMG-CoA reductase. This Dictyostelium discoideum (Social amoeba) protein is Hydroxymethylglutaryl-CoA synthase A (hgsA).